A 490-amino-acid chain; its full sequence is (21S)-21-acetyl-1-hydroxy-apo-melianone synthase CYP88A164 (490 aa).

The helical transmembrane segment at 4–24 threads the bilayer; sequence DLLWLILAIVVGTYVVLFGFL. Residue Cys-438 coordinates heme.

The protein belongs to the cytochrome P450 family. Heme serves as cofactor. In terms of tissue distribution, mainly expressed in petioles and, to a lower extent, in roots.

The protein resides in the membrane. The catalysed reaction is (21S)-21-acetoxyl-apo-melianone + reduced [NADPH--hemoprotein reductase] + O2 = (21S)-21-acetyl-1-hydroxy-apo-melianone + oxidized [NADPH--hemoprotein reductase] + H2O + H(+). The protein operates within secondary metabolite biosynthesis; terpenoid biosynthesis. Its function is as follows. Monooxygenase involved in the biosynthesis of limonoids triterpene natural products such as azadirachtin, an antifeedant widely used as bioinsecticide, and possessing many medicinal applications including anti-tumoral, anti-malarial, anti-rheumatic, antibacterial, anti-inflammatory, anti-pyretic and diuretic effects. Catalyzes the conversion of (21S)-21-acetoxyl-apo-melianone to (21S)-21-acetyl-1-hydroxy-apo-melianone. This chain is (21S)-21-acetyl-1-hydroxy-apo-melianone synthase CYP88A164, found in Melia azedarach (Chinaberry tree).